Consider the following 154-residue polypeptide: MIRHIEGSLQAGEHRFALLVSRFNSFITQQLEQGAIDALRRHGAKEEQLHVVHVPGAYEMPLIAQKLARSGNYDAVLCLGAVIRGGTPHFDYVAAEVSKGVAQVSMDTGVPVIFGVLTTDSIEQAIERAGTKAGNKGFDAAMTALEMVQLLRQI.

5-amino-6-(D-ribitylamino)uracil contacts are provided by residues Phe-23, 57–59 (AYE), and 81–83 (AVI). 86-87 (GT) contacts (2S)-2-hydroxy-3-oxobutyl phosphate. His-89 functions as the Proton donor in the catalytic mechanism. Phe-114 serves as a coordination point for 5-amino-6-(D-ribitylamino)uracil. Arg-128 contacts (2S)-2-hydroxy-3-oxobutyl phosphate.

Belongs to the DMRL synthase family. In terms of assembly, forms an icosahedral capsid composed of 60 subunits, arranged as a dodecamer of pentamers.

The catalysed reaction is (2S)-2-hydroxy-3-oxobutyl phosphate + 5-amino-6-(D-ribitylamino)uracil = 6,7-dimethyl-8-(1-D-ribityl)lumazine + phosphate + 2 H2O + H(+). It participates in cofactor biosynthesis; riboflavin biosynthesis; riboflavin from 2-hydroxy-3-oxobutyl phosphate and 5-amino-6-(D-ribitylamino)uracil: step 1/2. Catalyzes the formation of 6,7-dimethyl-8-ribityllumazine by condensation of 5-amino-6-(D-ribitylamino)uracil with 3,4-dihydroxy-2-butanone 4-phosphate. This is the penultimate step in the biosynthesis of riboflavin. In Acidithiobacillus ferrooxidans (strain ATCC 23270 / DSM 14882 / CIP 104768 / NCIMB 8455) (Ferrobacillus ferrooxidans (strain ATCC 23270)), this protein is 6,7-dimethyl-8-ribityllumazine synthase.